The following is a 157-amino-acid chain: Ribosomal RNA large subunit methyltransferase H (157 aa).

S-adenosyl-L-methionine-binding positions include Leu-73, Gly-105, and Leu-124–Phe-129.

This sequence belongs to the RNA methyltransferase RlmH family. In terms of assembly, homodimer.

The protein resides in the cytoplasm. It catalyses the reaction pseudouridine(1915) in 23S rRNA + S-adenosyl-L-methionine = N(3)-methylpseudouridine(1915) in 23S rRNA + S-adenosyl-L-homocysteine + H(+). Specifically methylates the pseudouridine at position 1915 (m3Psi1915) in 23S rRNA. This Parabacteroides distasonis (strain ATCC 8503 / DSM 20701 / CIP 104284 / JCM 5825 / NCTC 11152) protein is Ribosomal RNA large subunit methyltransferase H.